The chain runs to 170 residues: VIP peptides (170 aa).

Positions 1–20 (MDTRNKAQLLVLLTLLSVLF) are cleaved as a signal peptide. A propeptide spanning residues 21 to 79 (SQTSAWPLYRAPSALRLGDRIPFEGANEPDQVSLKEDIDMLQNALAENDTPYYDVSRNA) is cleaved from the precursor. Phosphoserine is present on S76. Residue M107 is modified to Methionine amide. Position 152 is an asparagine amide (N152). Positions 156–170 (SSEGESPDFPEELEK) are excised as a propeptide.

This sequence belongs to the glucagon family.

It localises to the secreted. VIP is a neuropeptide involved in a diverse array of physiological processes through activating the PACAP subfamily of class B1 G protein-coupled receptors: VIP receptor 1 (VPR1) and VIP receptor 2 (VPR2). Abundantly expressed throughout the CNS and peripheral nervous systems where they primarily exert neuroprotective and immune modulatory roles. Also causes vasodilation, lowers arterial blood pressure, stimulates myocardial contractility, increases glycogenolysis and relaxes the smooth muscle of trachea, stomach and gall bladder. Functionally, PHM-27 and PHV-42 are two bioactive forms from proteolysis of the same precursor protein, that cause vasodilation. PHM-27 is a potent agonist of the calcitonin receptor CALCR, with similar efficacy as calcitonin. This Homo sapiens (Human) protein is VIP peptides.